We begin with the raw amino-acid sequence, 205 residues long: Recombination protein RecR (205 aa).

A C4-type zinc finger spans residues 60-75 (CKVCHNISDTETCQIC). The Toprim domain maps to 83–178 (SMVCVVENIR…KLSVLARGVS (96 aa)).

It belongs to the RecR family.

Its function is as follows. May play a role in DNA repair. It seems to be involved in an RecBC-independent recombinational process of DNA repair. It may act with RecF and RecO. The sequence is that of Recombination protein RecR from Bacteroides fragilis (strain ATCC 25285 / DSM 2151 / CCUG 4856 / JCM 11019 / LMG 10263 / NCTC 9343 / Onslow / VPI 2553 / EN-2).